The following is a 145-amino-acid chain: Cell wall synthesis protein CwsA (145 aa).

Residues 104-124 (WIFAGIAAAILAGGAVAFSIV) form a helical membrane-spanning segment.

This sequence belongs to the CwsA family. As to quaternary structure, interacts with CrgA and Wag31.

The protein localises to the cell membrane. In terms of biological role, required for regulated cell division, cell wall synthesis and the maintenance of cell shape. This chain is Cell wall synthesis protein CwsA, found in Mycobacterium tuberculosis (strain ATCC 25618 / H37Rv).